The following is a 207-amino-acid chain: MPKVTVYNQTGSQVGEIELAEAIFGIEPNEAVLFEAVVMQRASLRQGTHKVKNRSEVSGGGRKPWRQKGTGRARQGSIRSPQWRGGGTVFGPTPRSYAYKLPKKVRRLAIKSALATKVVENNIVVLEDLVLNAPKTKDMVAVLKGLAVEKKALIVTADVNEAVELSARNIPGVTVITADGVNVLDVLHHDKLIMTKAAVEKVEEVLA.

The segment at 48-89 (THKVKNRSEVSGGGRKPWRQKGTGRARQGSIRSPQWRGGGTV) is disordered.

The protein belongs to the universal ribosomal protein uL4 family. As to quaternary structure, part of the 50S ribosomal subunit.

Functionally, one of the primary rRNA binding proteins, this protein initially binds near the 5'-end of the 23S rRNA. It is important during the early stages of 50S assembly. It makes multiple contacts with different domains of the 23S rRNA in the assembled 50S subunit and ribosome. Its function is as follows. Forms part of the polypeptide exit tunnel. The sequence is that of Large ribosomal subunit protein uL4 from Bacillus cytotoxicus (strain DSM 22905 / CIP 110041 / 391-98 / NVH 391-98).